The following is a 30-amino-acid chain: Cyclotide cycloviolacin O17 (30 aa).

Residues 1–30 constitute a cross-link (cyclopeptide (Gly-Asn)); sequence GIPCGESCVWIPCISAAIGCSCKNKVCYRN. Intrachain disulfides connect cysteine 4-cysteine 20, cysteine 8-cysteine 22, and cysteine 13-cysteine 27.

In terms of processing, this is a cyclic peptide.

Functionally, probably participates in a plant defense mechanism. The polypeptide is Cyclotide cycloviolacin O17 (Psychotria brachyceras).